Here is a 267-residue protein sequence, read N- to C-terminus: DCN1-like protein 2 (267 aa).

The tract at residues 1-48 (MTRKYTKKSSGSTASTTNSTAEIVDLTTSTSSVGKKRKSPDEKAQPIT) is disordered. A compositionally biased stretch (low complexity) spans 8–21 (KSSGSTASTTNSTA). One can recognise a DCUN1 domain in the interval 75-262 (HYTYLYTYIF…LLDQFSEWVQ (188 aa)).

The protein is DCN1-like protein 2 of Dictyostelium discoideum (Social amoeba).